Reading from the N-terminus, the 281-residue chain is Glyoxalase 1 (281 aa).

VOC domains lie at 4-127 (RALH…IGKA) and 132-251 (KVLR…FVGD).

This sequence belongs to the glyoxalase I family. In terms of tissue distribution, expressed in the following tissues in both larvae and adults: pharynx, pharyngeal-intestinal valve, intestine, anal sphincter, vulval muscle, seam cells and the nervous system.

Functionally, thought to act as a glyoxalase. May remove methylglyoxal from mitochondrial proteins. Has roles in reducing oxidative stress and increasing lifespan. In Caenorhabditis elegans, this protein is Glyoxalase 1 (glod-4).